The following is a 1352-amino-acid chain: Astrotactin-2 (1352 aa).

The disordered stretch occupies residues 1–31 (MAAAGARRSPGRGLGLRGRPRLGFHPGPPPP). The signal sequence occupies residues 1–51 (MAAAGARRSPGRGLGLRGRPRLGFHPGPPPPPPPPLLLLFLLLLPPPPLLA). Topologically, residues 52–218 (GATAAAASRE…IVEEQMHILH (167 aa)) are lumenal. An N-linked (GlcNAc...) asparagine glycan is attached at asparagine 180. The helical transmembrane segment at 219–239 (ISVMGGLIALLLLLLVFTVAL) threads the bilayer. The Cytoplasmic portion of the chain corresponds to 240 to 447 (YAQRRWQKRR…KGLLKSPVNK (208 aa)). 2 disordered regions span residues 308 to 327 (EEEE…DEFG) and 375 to 421 (TPVE…ADDE). Positions 383–392 (QPASRSSTSA) are enriched in polar residues. A helical membrane pass occupies residues 448 to 468 (TALTLIAVSSCILAMVCGNQM). The Lumenal portion of the chain corresponds to 469-1352 (SCPLTVKVTL…RNTYGETKGR (884 aa)). 3 EGF-like domains span residues 523–563 (VRDL…HLCV), 664–708 (PVRD…SGCY), and 712–764 (KGID…KSCL). 9 cysteine pairs are disulfide-bonded: cysteine 527–cysteine 539, cysteine 535–cysteine 546, cysteine 548–cysteine 562, cysteine 668–cysteine 681, cysteine 675–cysteine 692, cysteine 694–cysteine 707, cysteine 716–cysteine 728, cysteine 724–cysteine 748, and cysteine 750–cysteine 763. Residue asparagine 796 is glycosylated (N-linked (GlcNAc...) asparagine). Intrachain disulfides connect cysteine 838/cysteine 1000, cysteine 929/cysteine 990, and cysteine 996/cysteine 1003. N-linked (GlcNAc...) asparagine glycosylation is present at asparagine 1033. Disulfide bonds link cysteine 1049/cysteine 1060, cysteine 1062/cysteine 1075, cysteine 1149/cysteine 1171, cysteine 1203/cysteine 1290, and cysteine 1311/cysteine 1334. The region spanning 1079 to 1201 (PQPVLRLSPT…SELSTVTLRT (123 aa)) is the Fibronectin type-III domain.

It belongs to the astrotactin family. In terms of assembly, interacts with ASTN1; the interaction is not calcium-dependent. Detected in cerebellum granule neurons; not detected in astroglia (at protein level). Detected primarily in cerebellum, and at lower levels in brain cortex, olfactory bulb, hindbrain and hippocampus dentate gyrus. Between 6 and 10 days after birth, when granule cell migration occurs in the cerebellum, detected in granule cell precursors in the external germinal layer, the molecular layer, the internal granule layer and in Purkinje neurons. Detected in postmitotic neurons in adult cerebellum.

The protein resides in the membrane. Its subcellular location is the perikaryon. It is found in the cytoplasm. The protein localises to the cell cortex. It localises to the early endosome. The protein resides in the late endosome. Its subcellular location is the cytoplasmic vesicle. It is found in the clathrin-coated vesicle. In terms of biological role, mediates recycling of the neuronal cell adhesion molecule ASTN1 to the anterior pole of the cell membrane in migrating neurons. Promotes ASTN1 internalization and intracellular transport of endocytosed ASTN1. Selectively binds inositol-4,5-bisphosphate, inositol-3,4,5-trisphosphate and inositol-1,3,4,5-tetrakisphosphate, suggesting it is recruited to membranes that contain lipids with a phosphoinositide headgroup. The sequence is that of Astrotactin-2 (Astn2) from Mus musculus (Mouse).